The chain runs to 38 residues: Alpha-conotoxin LvIC (38 aa).

Positions 1-21 (SNGRNAAAGDKPSYWITLAIT) are excised as a propeptide. 2 disulfides stabilise this stretch: C23/C29 and C24/C34. Position 35 is a glutamine amide (Q35).

The protein belongs to the conotoxin A superfamily. In terms of processing, the two analogs ([DelQ14]LvIC and [D1G,DelQ14]LvIC) are amidated at their N-terminal Cys. Expressed by the venom gland.

Its subcellular location is the secreted. In terms of biological role, alpha-conotoxins bind to the nicotinic acetylcholine receptors (nAChR) and inhibit them. This synthetic peptide inhibits rat alpha-6/alpha-3-beta-4 nAChR (IC(50)=3.3 uM). In Conus lividus (Livid cone), this protein is Alpha-conotoxin LvIC.